The following is an 84-amino-acid chain: MSEFWLCFNCCIAEQPQPKRRRRIDRSMIGEPTNFVHTAHVGSGDLFSGMNSVSSIQNQMQSKGGYEGNISSNVQMQLVDTKAG.

Residues cysteine 10 and cysteine 11 are each lipidated (S-palmitoyl cysteine). The region spanning 29-42 (IGEPTNFVHTAHVG) is the CRIB domain.

It belongs to the CDC42SE/SPEC family.

Its subcellular location is the cytoplasm. It is found in the cytoskeleton. The protein resides in the cell membrane. Functionally, probably involved in the organization of the actin cytoskeleton by acting downstream of CDC42, inducing actin filament assembly. The protein is CDC42 small effector protein 2-A (cdc42se2-a) of Xenopus laevis (African clawed frog).